We begin with the raw amino-acid sequence, 102 residues long: Large ribosomal subunit protein mL63 (102 aa).

The protein belongs to the mitochondrion-specific ribosomal protein mL63 family.

It localises to the mitochondrion. The polypeptide is Large ribosomal subunit protein mL63 (MRPL57) (Bos taurus (Bovine)).